The sequence spans 904 residues: Alanine--tRNA ligase (904 aa).

Zn(2+) is bound by residues His584, His588, Cys687, and His691.

It belongs to the class-II aminoacyl-tRNA synthetase family. Zn(2+) is required as a cofactor.

The protein resides in the cytoplasm. It carries out the reaction tRNA(Ala) + L-alanine + ATP = L-alanyl-tRNA(Ala) + AMP + diphosphate. Its function is as follows. Catalyzes the attachment of alanine to tRNA(Ala) in a two-step reaction: alanine is first activated by ATP to form Ala-AMP and then transferred to the acceptor end of tRNA(Ala). Also edits incorrectly charged Ser-tRNA(Ala) and Gly-tRNA(Ala) via its editing domain. This Mycobacterium tuberculosis (strain ATCC 25177 / H37Ra) protein is Alanine--tRNA ligase.